Reading from the N-terminus, the 344-residue chain is MGTRQTKGSLAERASPGAAPGPRRERPDFWASLLLRAGDKAGRAGAGMPPYHRRVGMVQELLRMVRQGRREEAGTLLQHLRQDLGMESTSLDDVLYRYASFRNLVDPITHDLIISLARYIHCPKPEGDALGAMEKLCRQLTYHLSPHSQWRRHRGLVKRKPQACLKAVLAGSPPDNTVDLSGIPLTSRDLERVTSYLQRCGEQVDSVELGFTGLTDDMVLQLLPALSTLPRLTTLALNGNRLTRAVLRDLTDILKDPSKFPNVTWIDLGNNVDIFSLPQPFLLSLRKRSPKQGHLPTILELGEGPGSGEEVREGTVGQEDPGGGPVAPAEDHHEGKETVAAAQT.

The tract at residues 1–25 (MGTRQTKGSLAERASPGAAPGPRRE) is disordered. The segment covering 11 to 21 (AERASPGAAPG) has biased composition (low complexity). LRR repeat units follow at residues 204–217 (VDSV…LTDD) and 229–242 (LPRL…GNRL). Positions 295–344 (LPTILELGEGPGSGEEVREGTVGQEDPGGGPVAPAEDHHEGKETVAAAQT) are disordered.

The protein belongs to the LRRC75 family.

The chain is Leucine-rich repeat-containing protein 75A (LRRC75A) from Homo sapiens (Human).